The primary structure comprises 326 residues: Nuclear egress protein 1 (326 aa).

The segment at 115–244 (CLSLSGMGYY…YAVFPTKSVH (130 aa)) adopts a CCCH-type zinc-finger fold.

The protein belongs to the herpesviridae NEC1 protein family. As to quaternary structure, forms a heterohexameric complex with NEC2. Interacts with capsid vertex specific component 2/CVC2; this interaction directs the capsid to the host inner nuclear membrane to initiate budding. Phosphorylated at serine residues in the N-terminus. This phosphorylation regulates the localization within the inner nuclear membrane.

The protein localises to the host nucleus inner membrane. Plays an essential role in virion nuclear egress, the first step of virion release from infected cell. Within the host nucleus, NEC1 interacts with the newly formed capsid through the vertexes and directs it to the inner nuclear membrane by associating with NEC2. Induces the budding of the capsid at the inner nuclear membrane as well as its envelopment into the perinuclear space. There, the NEC1/NEC2 complex promotes the fusion of the enveloped capsid with the outer nuclear membrane and the subsequent release of the viral capsid into the cytoplasm where it will reach the secondary budding sites in the host Golgi or trans-Golgi network. In Equine herpesvirus 1 (strain Ab4p) (EHV-1), this protein is Nuclear egress protein 1.